The sequence spans 72 residues: MMKKFTCFLLCATILCAIFCVSVAEKFHKMKSDIERDETPMECVENGGFCPDPEKMGDWCCGRCIRNECRNG.

The first 24 residues, 1-24 (MMKKFTCFLLCATILCAIFCVSVA), serve as a signal peptide directing secretion. Positions 25–41 (EKFHKMKSDIERDETPM) are excised as a propeptide. Disulfide bonds link Cys-43/Cys-61, Cys-50/Cys-64, and Cys-60/Cys-69.

Expressed by the venom gland.

The protein localises to the secreted. In Hexophthalma dolichocephala (Afrotropical spider), this protein is U1-sicaritoxin-Sdo1a.